The following is a 354-amino-acid chain: Uroporphyrinogen decarboxylase (354 aa).

Residues 27–31 (RQAGR), D77, Y154, T209, and H327 contribute to the substrate site.

Belongs to the uroporphyrinogen decarboxylase family. In terms of assembly, homodimer.

The protein resides in the cytoplasm. It catalyses the reaction uroporphyrinogen III + 4 H(+) = coproporphyrinogen III + 4 CO2. The protein operates within porphyrin-containing compound metabolism; protoporphyrin-IX biosynthesis; coproporphyrinogen-III from 5-aminolevulinate: step 4/4. Its function is as follows. Catalyzes the decarboxylation of four acetate groups of uroporphyrinogen-III to yield coproporphyrinogen-III. This is Uroporphyrinogen decarboxylase from Escherichia coli O81 (strain ED1a).